Here is a 635-residue protein sequence, read N- to C-terminus: Isethionate TRAP transporter permease protein DctMQ (635 aa).

16 helical membrane-spanning segments follow: residues 38–58 (KPFL…QTLY), 75–95 (TEEM…PVAI), 117–137 (ISWI…LWQS), 154–174 (LQLP…LMAV), 192–212 (TVIG…ADYI), 217–237 (VLFG…IGLG), 266–286 (FPIM…AGGL), 299–319 (GALP…FAAI), 350–370 (AIVA…PFVV), 379–399 (IGKL…ALMA), 431–451 (WALM…MTPT), 453–473 (AAAL…RELS), 481–501 (VVEA…ATIF), 526–546 (IAIL…MEAL), 572–592 (IIMV…VNLF), and 609–629 (VLPL…VPAI).

The protein in the N-terminal section; belongs to the TRAP transporter small permease family. It in the C-terminal section; belongs to the TRAP transporter large permease family. As to quaternary structure, the complex comprises the periplasmic solute receptor protein DctP, and the fused transmembrane protein DctMQ.

The protein localises to the cell inner membrane. Its pathway is organosulfur degradation; alkanesulfonate degradation. In terms of biological role, part of the tripartite ATP-independent periplasmic (TRAP) transport system DctPQM involved in the uptake of isethionate (2-hydroxyethanesulfonate), which is then catabolized by enzymes encoded by adjacent genes in the locus. Thereby is involved in an anaerobic respiration pathway that converts the sulfonate isethionate to ammonia, acetate and sulfide. This is Isethionate TRAP transporter permease protein DctMQ from Oleidesulfovibrio alaskensis (strain ATCC BAA-1058 / DSM 17464 / G20) (Desulfovibrio alaskensis).